The sequence spans 257 residues: MLNFYGHEFSSRLLLGTAQYPSPEILRKVIDKSGTEIVTVSLRRETAGGKHSGQFWQFLKELNVTILPNTAGCYTIKEAVTTAQLARDLFKTPWIKLEVIGNPDTLQPNIFALVEAAQILNNEGFQIFAYTTDDLIVAEKLLEVGCRVIMPWCAPIGSAKGPRDTDGLRSIRAYLPDLTLVIDAGIGRPSHATIAMELGYDAILLNTAVAKSGDPVLMAEAFSKAVNAGYMAYKAGILEARDVAVPSTPIIGKAVFS.

Lys-96 functions as the Schiff-base intermediate with DXP in the catalytic mechanism. 1-deoxy-D-xylulose 5-phosphate is bound by residues Gly-157, 184-185, and 206-207; these read AG and NT.

Belongs to the ThiG family. Homotetramer. Forms heterodimers with either ThiH or ThiS.

The protein resides in the cytoplasm. It carries out the reaction [ThiS sulfur-carrier protein]-C-terminal-Gly-aminoethanethioate + 2-iminoacetate + 1-deoxy-D-xylulose 5-phosphate = [ThiS sulfur-carrier protein]-C-terminal Gly-Gly + 2-[(2R,5Z)-2-carboxy-4-methylthiazol-5(2H)-ylidene]ethyl phosphate + 2 H2O + H(+). Its pathway is cofactor biosynthesis; thiamine diphosphate biosynthesis. Catalyzes the rearrangement of 1-deoxy-D-xylulose 5-phosphate (DXP) to produce the thiazole phosphate moiety of thiamine. Sulfur is provided by the thiocarboxylate moiety of the carrier protein ThiS. In vitro, sulfur can be provided by H(2)S. The sequence is that of Thiazole synthase from Bartonella bacilliformis (strain ATCC 35685 / KC583 / Herrer 020/F12,63).